The chain runs to 482 residues: Cardiolipin synthase (482 aa).

2 consecutive transmembrane segments (helical) span residues 4 to 24 and 34 to 54; these read LAYL…VTVF and WAWL…YLIF. 2 PLD phosphodiesterase domains span residues 217 to 244 and 395 to 422; these read LNYR…GDEY and DNGF…DFRS. Residues His-222, Lys-224, Asp-229, His-400, Lys-402, and Asp-407 contribute to the active site.

Belongs to the phospholipase D family. Cardiolipin synthase subfamily.

It is found in the cell membrane. The enzyme catalyses 2 a 1,2-diacyl-sn-glycero-3-phospho-(1'-sn-glycerol) = a cardiolipin + glycerol. Catalyzes the reversible phosphatidyl group transfer from one phosphatidylglycerol molecule to another to form cardiolipin (CL) (diphosphatidylglycerol) and glycerol. This Listeria monocytogenes serotype 4b (strain CLIP80459) protein is Cardiolipin synthase (cls).